The sequence spans 84 residues: Small ribosomal subunit protein uS17 (84 aa).

The protein belongs to the universal ribosomal protein uS17 family. As to quaternary structure, part of the 30S ribosomal subunit.

Functionally, one of the primary rRNA binding proteins, it binds specifically to the 5'-end of 16S ribosomal RNA. The polypeptide is Small ribosomal subunit protein uS17 (Karelsulcia muelleri (strain GWSS) (Sulcia muelleri)).